We begin with the raw amino-acid sequence, 458 residues long: V-type ATP synthase beta chain (458 aa).

This sequence belongs to the ATPase alpha/beta chains family.

Functionally, produces ATP from ADP in the presence of a proton gradient across the membrane. The V-type beta chain is a regulatory subunit. This chain is V-type ATP synthase beta chain, found in Enterococcus faecalis (strain ATCC 700802 / V583).